The chain runs to 312 residues: Malate dehydrogenase (312 aa).

NAD(+) is bound by residues 7-13 (GAAGGIG) and Asp-34. Residues Arg-81 and Arg-87 each coordinate substrate. Residues Asn-94 and 117–119 (ITN) each bind NAD(+). The substrate site is built by Asn-119 and Arg-153. The Proton acceptor role is filled by His-177. An NAD(+)-binding site is contributed by Met-227.

It belongs to the LDH/MDH superfamily. MDH type 1 family. In terms of assembly, homodimer.

The enzyme catalyses (S)-malate + NAD(+) = oxaloacetate + NADH + H(+). In terms of biological role, catalyzes the reversible oxidation of malate to oxaloacetate. This chain is Malate dehydrogenase, found in Salmonella agona (strain SL483).